Reading from the N-terminus, the 562-residue chain is NAD-dependent malic enzyme (562 aa).

Catalysis depends on tyrosine 101, which acts as the Proton donor. Residue arginine 154 coordinates NAD(+). Residue lysine 172 is the Proton acceptor of the active site. A divalent metal cation is bound by residues glutamate 243, aspartate 244, and aspartate 267. The NAD(+) site is built by aspartate 267 and asparagine 415.

It belongs to the malic enzymes family. As to quaternary structure, homotetramer. Mg(2+) serves as cofactor. Mn(2+) is required as a cofactor.

The catalysed reaction is (S)-malate + NAD(+) = pyruvate + CO2 + NADH. It carries out the reaction oxaloacetate + H(+) = pyruvate + CO2. This chain is NAD-dependent malic enzyme, found in Shewanella loihica (strain ATCC BAA-1088 / PV-4).